The chain runs to 252 residues: 5'-nucleotidase SurE (252 aa).

Positions 8, 9, 39, and 91 each coordinate a divalent metal cation.

It belongs to the SurE nucleotidase family. A divalent metal cation serves as cofactor.

It is found in the cytoplasm. It carries out the reaction a ribonucleoside 5'-phosphate + H2O = a ribonucleoside + phosphate. Functionally, nucleotidase that shows phosphatase activity on nucleoside 5'-monophosphates. The protein is 5'-nucleotidase SurE of Bordetella bronchiseptica (strain ATCC BAA-588 / NCTC 13252 / RB50) (Alcaligenes bronchisepticus).